A 351-amino-acid polypeptide reads, in one-letter code: Selenide, water dikinase (351 aa).

Cys-20 is a catalytic residue. ATP is bound by residues Lys-23 and 51 to 53 (TKD). Asp-54 contacts Mg(2+). ATP is bound by residues Asp-71, Asp-94, and 142-144 (GHS). Asp-94 is a binding site for Mg(2+). A Mg(2+)-binding site is contributed by Asp-230.

This sequence belongs to the selenophosphate synthase 1 family. Class I subfamily. In terms of assembly, homodimer. Mg(2+) serves as cofactor.

The enzyme catalyses hydrogenselenide + ATP + H2O = selenophosphate + AMP + phosphate + 2 H(+). Functionally, synthesizes selenophosphate from selenide and ATP. The protein is Selenide, water dikinase of Pasteurella multocida (strain Pm70).